The following is a 106-amino-acid chain: Movement protein TGB2 (106 aa).

Topologically, residues 1–8 are cytoplasmic; the sequence is MPLTPPPD. Residues 9 to 29 form a helical membrane-spanning segment; the sequence is YTRVYTALAIGASIAFFTGLI. The Lumenal portion of the chain corresponds to 30–73; that stretch reads TRNTLPSVGDLQHNLPHGGRYRDGTKSVEYCGPRKLNSVESGSR. A helical membrane pass occupies residues 74 to 94; the sequence is WTFQPWLLVIVLVALIIALGR. The Cytoplasmic portion of the chain corresponds to 95–106; it reads QGHNCRACGRSH.

The protein belongs to the Tymovirales TGBp2 protein family.

The protein resides in the host endoplasmic reticulum membrane. Functionally, plays a role in viral cell-to-cell propagation, by facilitating genome transport to neighboring plant cells through plasmosdesmata,. In Lilium (LSV), this protein is Movement protein TGB2.